A 558-amino-acid polypeptide reads, in one-letter code: Adenine deaminase (558 aa).

Belongs to the metallo-dependent hydrolases superfamily. Adenine deaminase family. Mn(2+) is required as a cofactor.

The enzyme catalyses adenine + H2O + H(+) = hypoxanthine + NH4(+). The sequence is that of Adenine deaminase from Deinococcus deserti (strain DSM 17065 / CIP 109153 / LMG 22923 / VCD115).